We begin with the raw amino-acid sequence, 518 residues long: Glutamate--cysteine ligase (518 aa).

The protein belongs to the glutamate--cysteine ligase type 1 family. Type 1 subfamily.

It carries out the reaction L-cysteine + L-glutamate + ATP = gamma-L-glutamyl-L-cysteine + ADP + phosphate + H(+). Its pathway is sulfur metabolism; glutathione biosynthesis; glutathione from L-cysteine and L-glutamate: step 1/2. The chain is Glutamate--cysteine ligase (gshA) from Buchnera aphidicola subsp. Acyrthosiphon pisum (strain APS) (Acyrthosiphon pisum symbiotic bacterium).